Consider the following 380-residue polypeptide: Cytochrome b (380 aa).

The next 4 membrane-spanning stretches (helical) occupy residues 33 to 53 (FGSL…FLAM), 77 to 98 (WLIR…YLHI), 113 to 133 (WNVG…GYVL), and 178 to 198 (FFAF…IHLI). Heme b contacts are provided by histidine 83 and histidine 97. Residues histidine 182 and histidine 196 each contribute to the heme b site. Histidine 201 contributes to the a ubiquinone binding site. 4 consecutive transmembrane segments (helical) span residues 226–246 (YKDL…ALFS), 288–308 (LGGV…PILH), 320–340 (FSQF…WIGG), and 347–367 (FVII…VMIP).

The protein belongs to the cytochrome b family. The cytochrome bc1 complex contains 3 respiratory subunits (MT-CYB, CYC1 and UQCRFS1), 2 core proteins (UQCRC1 and UQCRC2) and probably 6 low-molecular weight proteins. Heme b serves as cofactor.

The protein resides in the mitochondrion inner membrane. Component of the ubiquinol-cytochrome c reductase complex (complex III or cytochrome b-c1 complex) that is part of the mitochondrial respiratory chain. The b-c1 complex mediates electron transfer from ubiquinol to cytochrome c. Contributes to the generation of a proton gradient across the mitochondrial membrane that is then used for ATP synthesis. The polypeptide is Cytochrome b (mt-cyb) (Paralichthys olivaceus (Bastard halibut)).